A 773-amino-acid polypeptide reads, in one-letter code: LON peptidase N-terminal domain and RING finger protein 1 (773 aa).

A disordered region spans residues 1 to 29 (MSSPAVARTSPGGSREMAPAPQGRGRFWE). Residues 48–81 (WELLLRRGELLALGGHLKGALEAFAAALRRGAPA) form a TPR 1 repeat. Residues 123-159 (CLGCRGFLSEPVTVPCGHSYCRRCLRRELRARCRLCR) form an RING-type 1 zinc finger. 3 TPR repeats span residues 212 to 244 (ARAAGRLGELLHQGRYREALAAACEALRAEPSD), 246 to 278 (IVKIYRAESYAGLQEFKAAIEDLNAVLFQLPDW), and 279 to 312 (PEVYFRKGKVLCDAGFLGDALQLFLQCLALDEDF). Positions 359–370 (EESQSLNEPSPK) are enriched in polar residues. Positions 359–388 (EESQSLNEPSPKQSEEIPEVTSEPVKGSLN) are disordered. Serine 431 is modified (phosphoserine). The segment at 479–517 (CSLCMRLFFEPVTTPCGHSFCKNCLERCLDHAPYCPLCK) adopts an RING-type 2 zinc-finger fold. Residues 558–768 (TAELSHLTKN…KIQHILTYFS (211 aa)) enclose the Lon N-terminal domain.

The polypeptide is LON peptidase N-terminal domain and RING finger protein 1 (LONRF1) (Homo sapiens (Human)).